The chain runs to 354 residues: Uroporphyrinogen decarboxylase (354 aa).

Substrate-binding positions include 27–31, Phe46, Asp77, Tyr154, Thr209, and His327; that span reads RQAGR.

It belongs to the uroporphyrinogen decarboxylase family. Homodimer.

It is found in the cytoplasm. The catalysed reaction is uroporphyrinogen III + 4 H(+) = coproporphyrinogen III + 4 CO2. It participates in porphyrin-containing compound metabolism; protoporphyrin-IX biosynthesis; coproporphyrinogen-III from 5-aminolevulinate: step 4/4. In terms of biological role, catalyzes the decarboxylation of four acetate groups of uroporphyrinogen-III to yield coproporphyrinogen-III. This is Uroporphyrinogen decarboxylase from Escherichia coli O157:H7.